We begin with the raw amino-acid sequence, 457 residues long: Argininosuccinate lyase (457 aa).

This sequence belongs to the lyase 1 family. Argininosuccinate lyase subfamily.

It localises to the cytoplasm. It catalyses the reaction 2-(N(omega)-L-arginino)succinate = fumarate + L-arginine. It participates in amino-acid biosynthesis; L-arginine biosynthesis; L-arginine from L-ornithine and carbamoyl phosphate: step 3/3. The polypeptide is Argininosuccinate lyase (Shigella flexneri serotype 5b (strain 8401)).